Reading from the N-terminus, the 886-residue chain is Envelope glycoprotein GP350 (886 aa).

Residues 1–839 (MEAALLVCQY…TSQPRFSNLS (839 aa)) are Virion surface-facing. Residues asparagine 47, asparagine 87, asparagine 114, asparagine 166, asparagine 169, asparagine 195, asparagine 229, asparagine 277, asparagine 318, asparagine 328, asparagine 345, asparagine 356, asparagine 378, asparagine 386, asparagine 411, asparagine 435, asparagine 443, asparagine 457, asparagine 497, asparagine 519, asparagine 533, asparagine 554, asparagine 568, asparagine 589, asparagine 603, asparagine 606, asparagine 624, and asparagine 635 are each glycosylated (N-linked (GlcNAc...) asparagine; by host). The segment at 423 to 810 (KAPESTTTSP…PSTSSKLRPR (388 aa)) is disordered. The segment covering 428–437 (TTTSPTLNTT) has biased composition (low complexity). The segment covering 442 to 488 (PNTTTGLPSSTHVPTNLTAPASTGPTVSTADVTSPTPAGTTSGASPV) has biased composition (polar residues). Low complexity predominate over residues 507–595 (TSPTSAVTTP…PTPNATSPTV (89 aa)). The segment covering 596 to 637 (GETSPQANTTNHTLGGTSSTPVVTSPPKNATSAVTTGQHNIT) has biased composition (polar residues). Over residues 638-660 (SSSTSSMSLRPSSISETLSPSTS) the composition is skewed to low complexity. Residues asparagine 662 and asparagine 680 are each glycosylated (N-linked (GlcNAc...) asparagine; by host). The segment covering 684 to 699 (VTPASTSTHHVSTSSP) has biased composition (low complexity). The span at 704 to 720 (GTTSQASGPGNSSTSTK) shows a compositional bias: polar residues. Asparagine 714, asparagine 725, asparagine 734, and asparagine 759 each carry an N-linked (GlcNAc...) asparagine; by host glycan. Residues 733-760 (KNATSPQAPSGQKTAVPTVTSTGGKANS) show a composition bias toward polar residues. Over residues 761–771 (TTGGKHTTGHG) the composition is skewed to low complexity. Positions 773–806 (RTSTEPTTDYGGDSTTPRTRYNATTYLPPSTSSK) are enriched in polar residues. N-linked (GlcNAc...) asparagine; by host glycosylation is found at asparagine 794 and asparagine 837. The chain crosses the membrane as a helical span at residues 840–860 (MLVLQWASLAVLTLLLLLVMA). The Intravirion segment spans residues 861–886 (DCAFRRNLSTSHTYTTPPYDDAETYV).

The protein belongs to the Epstein-Barr GP350 family. In terms of assembly, interacts with host CR2. Post-translationally, extensively glycosylated.

It is found in the virion membrane. It localises to the host membrane. Functionally, initiates virion attachment to host B-lymphocyte cell, leading to virus entry. Acts by binding to host CR2 at the surface of B-lymphocytes, facilitating the binding of viral glycoprotein gp42 to HLA class II molecules. Attachment triggers virion-host membrane fusion and invasion of the host cell. The protein is Envelope glycoprotein GP350 of Homo sapiens (Human).